Consider the following 172-residue polypeptide: Protein GrpE (172 aa).

It belongs to the GrpE family. As to quaternary structure, homodimer.

Its subcellular location is the cytoplasm. Participates actively in the response to hyperosmotic and heat shock by preventing the aggregation of stress-denatured proteins, in association with DnaK and GrpE. It is the nucleotide exchange factor for DnaK and may function as a thermosensor. Unfolded proteins bind initially to DnaJ; upon interaction with the DnaJ-bound protein, DnaK hydrolyzes its bound ATP, resulting in the formation of a stable complex. GrpE releases ADP from DnaK; ATP binding to DnaK triggers the release of the substrate protein, thus completing the reaction cycle. Several rounds of ATP-dependent interactions between DnaJ, DnaK and GrpE are required for fully efficient folding. This is Protein GrpE from Thermotoga petrophila (strain ATCC BAA-488 / DSM 13995 / JCM 10881 / RKU-1).